Consider the following 196-residue polypeptide: MAGNKKINRREEILQALAEMLESNEGASRITTAKLAKQVGVSEAALYRHFPSKARMFEGLIEFIEESLMSRINRIFDEEKDTLNRIRLVMQLLLAFAERNPGLTRILSGHALMFENERLRDRINQLFERIETSLRQILRERKLREGKSFPVDENILAAQLLGQVEGSLNRFVRSDFKYLPTANFDEYWALLSAQIK.

An HTH tetR-type domain is found at 7–68; the sequence is INRREEILQA…GLIEFIEESL (62 aa). The H-T-H motif DNA-binding region spans 31–50; the sequence is TTAKLAKQVGVSEAALYRHF. Residues 110 to 139 adopt a coiled-coil conformation; the sequence is HALMFENERLRDRINQLFERIETSLRQILR.

Belongs to the nucleoid occlusion factor SlmA family. In terms of assembly, homodimer. Interacts with FtsZ.

It localises to the cytoplasm. The protein resides in the nucleoid. Functionally, required for nucleoid occlusion (NO) phenomenon, which prevents Z-ring formation and cell division over the nucleoid. Acts as a DNA-associated cell division inhibitor that binds simultaneously chromosomal DNA and FtsZ, and disrupts the assembly of FtsZ polymers. SlmA-DNA-binding sequences (SBS) are dispersed on non-Ter regions of the chromosome, preventing FtsZ polymerization at these regions. This is Nucleoid occlusion factor SlmA from Vibrio cholerae serotype O1 (strain ATCC 39315 / El Tor Inaba N16961).